Consider the following 410-residue polypeptide: Argininosuccinate synthase (410 aa).

Residues 14–22 and Ala-41 contribute to the ATP site; that span reads AYSGGLDTS. The L-citrulline site is built by Tyr-92 and Ser-97. ATP is bound at residue Gly-122. 3 residues coordinate L-aspartate: Thr-124, Asn-128, and Asp-129. Position 128 (Asn-128) interacts with L-citrulline. The L-citrulline site is built by Arg-132, Ser-183, Ser-192, Glu-268, and Tyr-280.

Belongs to the argininosuccinate synthase family. Type 1 subfamily. In terms of assembly, homotetramer.

It localises to the cytoplasm. It catalyses the reaction L-citrulline + L-aspartate + ATP = 2-(N(omega)-L-arginino)succinate + AMP + diphosphate + H(+). It functions in the pathway amino-acid biosynthesis; L-arginine biosynthesis; L-arginine from L-ornithine and carbamoyl phosphate: step 2/3. In Parvibaculum lavamentivorans (strain DS-1 / DSM 13023 / NCIMB 13966), this protein is Argininosuccinate synthase.